The following is a 247-amino-acid chain: ATP synthase subunit a (247 aa).

6 helical membrane passes run 24–44 (IAFTNSSAYMLVAVVLTSLLM), 82–102 (FFPFVFTIFMLVTVSNLVGIV), 112–132 (IIVTAALAFLVFFTVLIYGFY), 141–161 (LFVPSGIPIVILPLVVAIEVI), 194–214 (MLGAMGIVGVFGAVLPLALVV), and 219–239 (LELLVAFLQAYVFTILTCIYI).

The protein belongs to the ATPase A chain family. As to quaternary structure, F-type ATPases have 2 components, CF(1) - the catalytic core - and CF(0) - the membrane proton channel. CF(1) has five subunits: alpha(3), beta(3), gamma(1), delta(1), epsilon(1). CF(0) has three main subunits: a(1), b(2) and c(9-12). The alpha and beta chains form an alternating ring which encloses part of the gamma chain. CF(1) is attached to CF(0) by a central stalk formed by the gamma and epsilon chains, while a peripheral stalk is formed by the delta and b chains.

The protein localises to the cell inner membrane. Functionally, key component of the proton channel; it plays a direct role in the translocation of protons across the membrane. The chain is ATP synthase subunit a from Nitrobacter hamburgensis (strain DSM 10229 / NCIMB 13809 / X14).